Consider the following 204-residue polypeptide: ATP-dependent Clp protease proteolytic subunit 1 (204 aa).

Residue Ser-97 is the Nucleophile of the active site. His-122 is an active-site residue.

This sequence belongs to the peptidase S14 family. Fourteen ClpP subunits assemble into 2 heptameric rings which stack back to back to give a disk-like structure with a central cavity, resembling the structure of eukaryotic proteasomes.

The protein resides in the cytoplasm. It carries out the reaction Hydrolysis of proteins to small peptides in the presence of ATP and magnesium. alpha-casein is the usual test substrate. In the absence of ATP, only oligopeptides shorter than five residues are hydrolyzed (such as succinyl-Leu-Tyr-|-NHMec, and Leu-Tyr-Leu-|-Tyr-Trp, in which cleavage of the -Tyr-|-Leu- and -Tyr-|-Trp bonds also occurs).. Cleaves peptides in various proteins in a process that requires ATP hydrolysis. Has a chymotrypsin-like activity. Plays a major role in the degradation of misfolded proteins. The sequence is that of ATP-dependent Clp protease proteolytic subunit 1 from Nostoc sp. (strain PCC 7120 / SAG 25.82 / UTEX 2576).